A 418-amino-acid chain; its full sequence is Hepatic and glial cell adhesion molecule (418 aa).

Residues 1-33 (MKREREAPSRAFSALRLAPFVYLLLIQTEPLEG) form the signal peptide. The 108-residue stretch at 34–141 (VNITSPVRLI…TGEKTINLTV (108 aa)) folds into the Ig-like V-type domain. Residues 34–240 (VNITSPVRLI…VKITVYRRSS (207 aa)) lie on the Extracellular side of the membrane. 4 N-linked (GlcNAc...) asparagine glycosylation sites follow: Asn35, Asn138, Asn167, and Asn189. Residues 148–234 (PQVLVASTTV…QGRSPPVKIT (87 aa)) enclose the Ig-like C2-type domain. Cysteines 168 and 217 form a disulfide. Residues 241-261 (LYIILSTGGIFLLVTLVTVCA) form a helical membrane-spanning segment. The Cytoplasmic segment spans residues 262 to 418 (CWKPSKKSGK…DEAGPVEISA (157 aa)). Residues 271–418 (KKRKLEKQNS…DEAGPVEISA (148 aa)) are disordered. The residue at position 280 (Ser280) is a Phosphoserine. Basic and acidic residues predominate over residues 287-308 (SDDRLKPEADTLPRSGEQERKN). Ser352 and Ser379 each carry phosphoserine. Low complexity predominate over residues 385–400 (GSPGRSRSASRTLRTA).

As to quaternary structure, homodimer. Dimer formation occurs predominantly through cis interactions on the cell surface. Part of a complex containing MLC1, TRPV4, AQP4 and ATP1B1. Interacts with CLCN2. In terms of processing, N-glycosylated.

It localises to the cytoplasm. Its subcellular location is the cell membrane. Functionally, involved in regulating cell motility and cell-matrix interactions. May inhibit cell growth through suppression of cell proliferation. In glia, associates and targets CLCN2 at astrocytic processes and myelinated fiber tracts where it may regulate transcellular chloride flux involved in neuron excitability. In Bos taurus (Bovine), this protein is Hepatic and glial cell adhesion molecule.